The following is a 312-amino-acid chain: Ribonuclease Z (312 aa).

Residues His62, His64, Asp66, His67, His144, Asp215, and His273 each contribute to the Zn(2+) site. Asp66 functions as the Proton acceptor in the catalytic mechanism.

This sequence belongs to the RNase Z family. Homodimer. The cofactor is Zn(2+).

It carries out the reaction Endonucleolytic cleavage of RNA, removing extra 3' nucleotides from tRNA precursor, generating 3' termini of tRNAs. A 3'-hydroxy group is left at the tRNA terminus and a 5'-phosphoryl group is left at the trailer molecule.. Zinc phosphodiesterase, which displays some tRNA 3'-processing endonuclease activity. Probably involved in tRNA maturation, by removing a 3'-trailer from precursor tRNA. The polypeptide is Ribonuclease Z (Prochlorococcus marinus (strain MIT 9312)).